The following is a 684-amino-acid chain: Protein ecdysoneless (684 aa).

A compositionally biased stretch (acidic residues) spans 491 to 501 (EPELDSDDDEP). Disordered stretches follow at residues 491 to 528 (EPELDSDDDEPPPQANGSTGLTAKVKKNPSMRKACQRN) and 603 to 624 (TSVGKSFHGKKKTAPQADEDDF).

The protein belongs to the ECD family. Expressed in the ecdysone-producing larval ring gland, nervous system, imaginal disks and gonads.

The protein resides in the cytoplasm. Functionally, required in both the follicle cells and the germline for oocyte development. In Drosophila melanogaster (Fruit fly), this protein is Protein ecdysoneless.